The sequence spans 181 residues: Deoxyuridine 5'-triphosphate nucleotidohydrolase (181 aa).

Substrate contacts are provided by residues 96–98 (RSG), N109, 113–115 (TVD), and K123.

This sequence belongs to the dUTPase family. Mg(2+) is required as a cofactor.

It catalyses the reaction dUTP + H2O = dUMP + diphosphate + H(+). The protein operates within pyrimidine metabolism; dUMP biosynthesis; dUMP from dCTP (dUTP route): step 2/2. Functionally, this enzyme is involved in nucleotide metabolism: it produces dUMP, the immediate precursor of thymidine nucleotides and it decreases the intracellular concentration of dUTP so that uracil cannot be incorporated into DNA. This chain is Deoxyuridine 5'-triphosphate nucleotidohydrolase, found in Corynebacterium efficiens (strain DSM 44549 / YS-314 / AJ 12310 / JCM 11189 / NBRC 100395).